Reading from the N-terminus, the 310-residue chain is AMMECR1-like protein (310 aa).

A disordered region spans residues 26–92 (LSGSGTHSHG…SGALSPLPRP (67 aa)). Polar residues-rich tracts occupy residues 28–66 (GSGTHSHGNQSTTVPGSSSGPLQNHQHVDNSSGRENVSD) and 74–84 (SPITRMNTASG). Position 74 is a phosphoserine (Ser74). An AMMECR1 domain is found at 97 to 291 (NSTKNLVVTA…ISYAEYIASR (195 aa)).

The chain is AMMECR1-like protein (Ammecr1l) from Mus musculus (Mouse).